The primary structure comprises 542 residues: CTP synthase (542 aa).

The segment at 1–265 (MARYVFITGG…DNEVLAAFGI (265 aa)) is amidoligase domain. Serine 13 contacts CTP. Serine 13 contacts UTP. Residues 14 to 19 (SLGKGI) and aspartate 71 contribute to the ATP site. Aspartate 71 and glutamate 139 together coordinate Mg(2+). Residues 146 to 148 (DIE), 186 to 191 (KTKPTQ), and lysine 222 each bind CTP. UTP-binding positions include 186-191 (KTKPTQ) and lysine 222. A Glutamine amidotransferase type-1 domain is found at 291-541 (TIAIVGKYTG…IEAALEQSRL (251 aa)). Residue glycine 353 coordinates L-glutamine. The Nucleophile; for glutamine hydrolysis role is filled by cysteine 380. Residues 381–384 (FGMQ), glutamate 404, and arginine 469 each bind L-glutamine. Active-site residues include histidine 514 and glutamate 516.

The protein belongs to the CTP synthase family. As to quaternary structure, homotetramer.

It catalyses the reaction UTP + L-glutamine + ATP + H2O = CTP + L-glutamate + ADP + phosphate + 2 H(+). It carries out the reaction L-glutamine + H2O = L-glutamate + NH4(+). The catalysed reaction is UTP + NH4(+) + ATP = CTP + ADP + phosphate + 2 H(+). The protein operates within pyrimidine metabolism; CTP biosynthesis via de novo pathway; CTP from UDP: step 2/2. Its activity is regulated as follows. Allosterically activated by GTP, when glutamine is the substrate; GTP has no effect on the reaction when ammonia is the substrate. The allosteric effector GTP functions by stabilizing the protein conformation that binds the tetrahedral intermediate(s) formed during glutamine hydrolysis. Inhibited by the product CTP, via allosteric rather than competitive inhibition. In terms of biological role, catalyzes the ATP-dependent amination of UTP to CTP with either L-glutamine or ammonia as the source of nitrogen. Regulates intracellular CTP levels through interactions with the four ribonucleotide triphosphates. The sequence is that of CTP synthase from Sinorhizobium medicae (strain WSM419) (Ensifer medicae).